Reading from the N-terminus, the 300-residue chain is Ribosomal protein L11 methyltransferase (300 aa).

S-adenosyl-L-methionine-binding residues include Thr-144, Gly-165, Asp-187, and Asn-235.

This sequence belongs to the methyltransferase superfamily. PrmA family.

It localises to the cytoplasm. It carries out the reaction L-lysyl-[protein] + 3 S-adenosyl-L-methionine = N(6),N(6),N(6)-trimethyl-L-lysyl-[protein] + 3 S-adenosyl-L-homocysteine + 3 H(+). Methylates ribosomal protein L11. This is Ribosomal protein L11 methyltransferase from Prochlorococcus marinus (strain MIT 9515).